Here is a 39-residue protein sequence, read N- to C-terminus: SPbeta prophage-derived uncharacterized protein YorT (39 aa).

This chain is SPbeta prophage-derived uncharacterized protein YorT (yorT), found in Bacillus subtilis (strain 168).